A 372-amino-acid chain; its full sequence is NAD(P)H-quinone oxidoreductase subunit 1 (372 aa).

8 helical membrane-spanning segments follow: residues 27–47 (IIWLPLPMLIVLVSAVVGVLV), 97–117 (ILFTTGPILVLVPVILSWLIV), 128–148 (VGIGIFLWIALSSIQPIGLLM), 176–196 (LALSVLAVVLMTNSLSTIDIV), 204–224 (ILSWNIWRQPVGFIIFWICAL), 266–286 (ILSALLVSILYLGGWGFPIPV), 308–328 (SIGIIMTVLKAYLLVFIAILL), and 347–367 (FLLPISLANLLLTAGLKLALP).

Belongs to the complex I subunit 1 family. In terms of assembly, NDH-1 is composed of at least 11 different subunits.

Its subcellular location is the cellular thylakoid membrane. The enzyme catalyses a plastoquinone + NADH + (n+1) H(+)(in) = a plastoquinol + NAD(+) + n H(+)(out). The catalysed reaction is a plastoquinone + NADPH + (n+1) H(+)(in) = a plastoquinol + NADP(+) + n H(+)(out). In terms of biological role, NDH-1 shuttles electrons from an unknown electron donor, via FMN and iron-sulfur (Fe-S) centers, to quinones in the respiratory and/or the photosynthetic chain. The immediate electron acceptor for the enzyme in this species is believed to be plastoquinone. Couples the redox reaction to proton translocation, and thus conserves the redox energy in a proton gradient. This chain is NAD(P)H-quinone oxidoreductase subunit 1, found in Prochlorococcus marinus (strain MIT 9515).